The chain runs to 150 residues: Large ribosomal subunit protein bL9 (150 aa).

Belongs to the bacterial ribosomal protein bL9 family.

In terms of biological role, binds to the 23S rRNA. The protein is Large ribosomal subunit protein bL9 of Shewanella baltica (strain OS223).